The primary structure comprises 227 residues: UPF0173 metal-dependent hydrolase DR_0006 (227 aa).

Belongs to the UPF0173 family.

The sequence is that of UPF0173 metal-dependent hydrolase DR_0006 from Deinococcus radiodurans (strain ATCC 13939 / DSM 20539 / JCM 16871 / CCUG 27074 / LMG 4051 / NBRC 15346 / NCIMB 9279 / VKM B-1422 / R1).